The sequence spans 377 residues: 3-dehydroquinate synthase (377 aa).

NAD(+) contacts are provided by residues Gly-115–Asp-119, Thr-139–Ser-140, Lys-152, and Lys-162. Zn(2+) contacts are provided by Glu-195, His-257, and His-276.

The protein belongs to the sugar phosphate cyclases superfamily. Dehydroquinate synthase family. Co(2+) serves as cofactor. Zn(2+) is required as a cofactor. It depends on NAD(+) as a cofactor.

Its subcellular location is the cytoplasm. It catalyses the reaction 7-phospho-2-dehydro-3-deoxy-D-arabino-heptonate = 3-dehydroquinate + phosphate. Its pathway is metabolic intermediate biosynthesis; chorismate biosynthesis; chorismate from D-erythrose 4-phosphate and phosphoenolpyruvate: step 2/7. In terms of biological role, catalyzes the conversion of 3-deoxy-D-arabino-heptulosonate 7-phosphate (DAHP) to dehydroquinate (DHQ). This chain is 3-dehydroquinate synthase, found in Rhizobium etli (strain ATCC 51251 / DSM 11541 / JCM 21823 / NBRC 15573 / CFN 42).